The primary structure comprises 269 residues: Tryptophan synthase alpha chain (269 aa).

Active-site proton acceptor residues include E56 and D67.

Belongs to the TrpA family. In terms of assembly, tetramer of two alpha and two beta chains.

It catalyses the reaction (1S,2R)-1-C-(indol-3-yl)glycerol 3-phosphate + L-serine = D-glyceraldehyde 3-phosphate + L-tryptophan + H2O. The protein operates within amino-acid biosynthesis; L-tryptophan biosynthesis; L-tryptophan from chorismate: step 5/5. In terms of biological role, the alpha subunit is responsible for the aldol cleavage of indoleglycerol phosphate to indole and glyceraldehyde 3-phosphate. The polypeptide is Tryptophan synthase alpha chain (Mycobacterium marinum (strain ATCC BAA-535 / M)).